The chain runs to 1073 residues: Ubiquitin carboxyl-terminal hydrolase 53 (1073 aa).

In terms of domain architecture, USP spans 30-351 (KGLLNEPGQN…QPLLLFYANP (322 aa)). Residue Cys41 is the Nucleophile of the active site. Residues His66, Cys68, Cys73, Cys76, His132, Cys144, Cys149, His152, Cys165, Cys168, Cys224, and Cys228 each coordinate Zn(2+). His301 serves as the catalytic Proton acceptor. 2 disordered regions span residues 391–437 (LKEN…HIDQ) and 485–636 (LSHF…PKQK). The segment covering 407 to 418 (KFPTDNISSSNR) has biased composition (polar residues). Residues 524 to 541 (QSRASAQIISSSKSQILA) show a composition bias toward low complexity. Residues 553–563 (DNGTGYDTDSS) show a composition bias toward polar residues. Low complexity predominate over residues 612-627 (NISNKPKSSKDPSFSN).

Belongs to the peptidase C19 family. As to quaternary structure, interacts (via the C-terminal region) with the heterodimer TJP1:TJP2. In terms of tissue distribution, expressed predominantly in skeletal muscle and heart.

The protein resides in the cell junction. Its subcellular location is the tight junction. It catalyses the reaction Thiol-dependent hydrolysis of ester, thioester, amide, peptide and isopeptide bonds formed by the C-terminal Gly of ubiquitin (a 76-residue protein attached to proteins as an intracellular targeting signal).. Its function is as follows. Deubiquitinase that mediates 'Lys-63'-linked deubiquitination of tight junction proteins, such as MARVELD2 and LSR, and which is involved in the survival of auditory hair cells and hearing. Specifically cleaves 'Lys-63'-linked polyubiquitin chains composed of at least 3 ubiquitin molecules, while it is not able to deubiquitinate substrates with shorter ubiquitin chains: recognizes ubiquitin chain in position S2 and catalyzes en bloc cleavage of polyubiquitin chains from substrate proteins. Probably acts by modulating the barrier properties and mechanical stability of tight junctions via deubiquitination of MARVELD2 and LSR. The chain is Ubiquitin carboxyl-terminal hydrolase 53 from Homo sapiens (Human).